A 124-amino-acid polypeptide reads, in one-letter code: Peptidyl-tRNA hydrolase (124 aa).

The protein belongs to the PTH2 family.

The protein resides in the cytoplasm. The catalysed reaction is an N-acyl-L-alpha-aminoacyl-tRNA + H2O = an N-acyl-L-amino acid + a tRNA + H(+). Its function is as follows. The natural substrate for this enzyme may be peptidyl-tRNAs which drop off the ribosome during protein synthesis. In Aeropyrum pernix (strain ATCC 700893 / DSM 11879 / JCM 9820 / NBRC 100138 / K1), this protein is Peptidyl-tRNA hydrolase.